Reading from the N-terminus, the 435-residue chain is Glutamate-1-semialdehyde 2,1-aminomutase (435 aa).

Lys270 carries the post-translational modification N6-(pyridoxal phosphate)lysine.

The protein belongs to the class-III pyridoxal-phosphate-dependent aminotransferase family. HemL subfamily. In terms of assembly, homodimer. Requires pyridoxal 5'-phosphate as cofactor.

It is found in the cytoplasm. The enzyme catalyses (S)-4-amino-5-oxopentanoate = 5-aminolevulinate. It participates in porphyrin-containing compound metabolism; protoporphyrin-IX biosynthesis; 5-aminolevulinate from L-glutamyl-tRNA(Glu): step 2/2. The protein is Glutamate-1-semialdehyde 2,1-aminomutase of Wigglesworthia glossinidia brevipalpis.